The sequence spans 1170 residues: Type I restriction enzyme EcoKI endonuclease subunit (1170 aa).

A coiled-coil region spans residues 143 to 229 (YHQEVLTLKQ…QERKAYHKEI (87 aa)). Positions 431-450 (NQWFADNPGMSELGLRYYQE) form a DNA-binding region, H-T-H motif. In terms of domain architecture, Helicase ATP-binding spans 458-639 (KAIVKGQQEI…GEPVYRYTYR (182 aa)). 472–478 (ATGTGKT) serves as a coordination point for ATP. The DEAH box signature appears at 574 to 577 (DEAH). One can recognise a Helicase C-terminal domain in the interval 714 to 879 (ELTNYLDPTG…TLVNEITDSE (166 aa)).

It belongs to the HsdR family. As to quaternary structure, the type I restriction/modification system is composed of three polypeptides R, M and S. The restriction enzyme has stoichiometry R(2)M(2)S(1). The methyltransferase is composed of M(2)S(1). In terms of assembly, (Microbial infection) Interacts with Escherichia phage T7 protein Ocr; this interaction leads to the inhibition of the type I bifunctional endonuclease and methyltransferase restriction enzyme R.EcoKI composed of R(2)M(2)S(1). In terms of processing, upon purification after overexpression about one-third has the initiating methionine removed.

The enzyme catalyses Endonucleolytic cleavage of DNA to give random double-stranded fragments with terminal 5'-phosphates, ATP is simultaneously hydrolyzed.. Functionally, the subtype A restriction (R) subunit of a type I restriction enzyme that recognizes 5'-AACN(6)GTGC-3' and cleaves a random distance away. The R subunit is required for both endonuclease and ATPase activities but not for modification. Has endonucleolytic activity that requires Mg(2+), ATP and S-adenosyl-L-methionine (SAM); ATP can be replaced by dATP, no tested molecule could substitute for SAM. Generates double-stranded DNA with no nicks, by cutting one strand then the other within a few seconds. Cleaves only non-methylated DNA, hemi-methylated and fully methylated DNA are not substrates. After locating a non-methylated recognition site, the enzyme complex serves as a molecular motor that translocates DNA in an ATP-dependent manner until a collision occurs that triggers cleavage. In Escherichia coli (strain K12), this protein is Type I restriction enzyme EcoKI endonuclease subunit.